We begin with the raw amino-acid sequence, 186 residues long: ATP synthase subunit delta (186 aa).

The protein belongs to the ATPase delta chain family. F-type ATPases have 2 components, F(1) - the catalytic core - and F(0) - the membrane proton channel. F(1) has five subunits: alpha(3), beta(3), gamma(1), delta(1), epsilon(1). F(0) has three main subunits: a(1), b(2) and c(10-14). The alpha and beta chains form an alternating ring which encloses part of the gamma chain. F(1) is attached to F(0) by a central stalk formed by the gamma and epsilon chains, while a peripheral stalk is formed by the delta and b chains.

The protein resides in the cell inner membrane. In terms of biological role, f(1)F(0) ATP synthase produces ATP from ADP in the presence of a proton or sodium gradient. F-type ATPases consist of two structural domains, F(1) containing the extramembraneous catalytic core and F(0) containing the membrane proton channel, linked together by a central stalk and a peripheral stalk. During catalysis, ATP synthesis in the catalytic domain of F(1) is coupled via a rotary mechanism of the central stalk subunits to proton translocation. This protein is part of the stalk that links CF(0) to CF(1). It either transmits conformational changes from CF(0) to CF(1) or is implicated in proton conduction. The polypeptide is ATP synthase subunit delta (Nitrobacter winogradskyi (strain ATCC 25391 / DSM 10237 / CIP 104748 / NCIMB 11846 / Nb-255)).